The primary structure comprises 236 residues: Adenosine 5'-phosphosulfate reductase (236 aa).

Residues Cys122, Cys123, Cys205, and Cys208 each contribute to the [4Fe-4S] cluster site. Catalysis depends on Cys231, which acts as the Nucleophile; cysteine thiosulfonate intermediate.

This sequence belongs to the PAPS reductase family. CysH subfamily. [4Fe-4S] cluster is required as a cofactor.

It is found in the cytoplasm. It catalyses the reaction [thioredoxin]-disulfide + sulfite + AMP + 2 H(+) = adenosine 5'-phosphosulfate + [thioredoxin]-dithiol. Its pathway is sulfur metabolism; hydrogen sulfide biosynthesis; sulfite from sulfate. Its function is as follows. Catalyzes the formation of sulfite from adenosine 5'-phosphosulfate (APS) using thioredoxin as an electron donor. The protein is Adenosine 5'-phosphosulfate reductase of Mycolicibacterium smegmatis (strain ATCC 700084 / mc(2)155) (Mycobacterium smegmatis).